Consider the following 209-residue polypeptide: Large ribosomal subunit protein uL3 (209 aa).

Gln150 is modified (N5-methylglutamine).

It belongs to the universal ribosomal protein uL3 family. Part of the 50S ribosomal subunit. Forms a cluster with proteins L14 and L19. Methylated by PrmB.

Functionally, one of the primary rRNA binding proteins, it binds directly near the 3'-end of the 23S rRNA, where it nucleates assembly of the 50S subunit. This chain is Large ribosomal subunit protein uL3, found in Vibrio campbellii (strain ATCC BAA-1116).